A 280-amino-acid chain; its full sequence is DegV domain-containing protein CA_C1624 (280 aa).

A DegV domain is found at 4 to 279 (IALITDSTSD…PGLLGVVIFK (276 aa)). 2 residues coordinate hexadecanoate: T60 and S93.

May bind long-chain fatty acids, such as palmitate, and may play a role in lipid transport or fatty acid metabolism. The polypeptide is DegV domain-containing protein CA_C1624 (Clostridium acetobutylicum (strain ATCC 824 / DSM 792 / JCM 1419 / IAM 19013 / LMG 5710 / NBRC 13948 / NRRL B-527 / VKM B-1787 / 2291 / W)).